The chain runs to 136 residues: Group 1 truncated hemoglobin GlbN (136 aa).

A heme-binding site is contributed by histidine 81.

It belongs to the truncated hemoglobin family. Group I subfamily. In terms of assembly, homodimer. Requires heme as cofactor.

Functionally, binds oxygen cooperatively with very high affinity (P(50) = 0.013 mmHg at 20 degrees Celsius) because of a fast combination (25 microM(-1)sec(-1)) and a slow dissociation (0.2 sec(-1)) rate. The sequence is that of Group 1 truncated hemoglobin GlbN (glbN) from Mycobacterium bovis (strain ATCC BAA-935 / AF2122/97).